The following is a 420-amino-acid chain: uncharacterized protein (420 aa).

One can recognise a TRAM domain in the interval 7 to 65 (NIERGSVINVEILNAAHGGQGIAKYDGRVIFVKGAFPGDRLSANITHVKKKFARATIAS). Positions 245, 280, 304, and 349 each coordinate S-adenosyl-L-methionine. Residue C376 is the Nucleophile of the active site.

It belongs to the class I-like SAM-binding methyltransferase superfamily. RNA M5U methyltransferase family.

This is an uncharacterized protein from Corynebacterium diphtheriae (strain ATCC 700971 / NCTC 13129 / Biotype gravis).